A 136-amino-acid chain; its full sequence is Galectin-7 (136 aa).

A Galectin domain is found at His6–Phe136. Trp70–Gly76 contacts a beta-D-galactoside.

Monomer. Mainly expressed in stratified squamous epithelium.

The protein resides in the cytoplasm. Its subcellular location is the nucleus. It localises to the secreted. In terms of biological role, could be involved in cell-cell and/or cell-matrix interactions necessary for normal growth control. Pro-apoptotic protein that functions intracellularly upstream of JNK activation and cytochrome c release. The chain is Galectin-7 (LGALS7) from Homo sapiens (Human).